A 696-amino-acid polypeptide reads, in one-letter code: Polyribonucleotide nucleotidyltransferase (696 aa).

Mg(2+) contacts are provided by Asp-483 and Asp-489. Positions 550 to 609 (PRITTIYVKTDKIRDVIGSGGKNIRGITEATGVTIDIDDTGKINIASTDKAACDLAIKMI) constitute a KH domain. In terms of domain architecture, S1 motif spans 619-687 (GKLYMGLVKK…KQGKIKLSRK (69 aa)).

The protein belongs to the polyribonucleotide nucleotidyltransferase family. Requires Mg(2+) as cofactor.

The protein resides in the cytoplasm. It catalyses the reaction RNA(n+1) + phosphate = RNA(n) + a ribonucleoside 5'-diphosphate. Functionally, involved in mRNA degradation. Catalyzes the phosphorolysis of single-stranded polyribonucleotides processively in the 3'- to 5'-direction. In Geotalea uraniireducens (strain Rf4) (Geobacter uraniireducens), this protein is Polyribonucleotide nucleotidyltransferase.